We begin with the raw amino-acid sequence, 85 residues long: Small ribosomal subunit protein uS17 (85 aa).

Belongs to the universal ribosomal protein uS17 family. Part of the 30S ribosomal subunit.

Its function is as follows. One of the primary rRNA binding proteins, it binds specifically to the 5'-end of 16S ribosomal RNA. The polypeptide is Small ribosomal subunit protein uS17 (Acetivibrio thermocellus (strain ATCC 27405 / DSM 1237 / JCM 9322 / NBRC 103400 / NCIMB 10682 / NRRL B-4536 / VPI 7372) (Clostridium thermocellum)).